The following is a 315-amino-acid chain: Peroxidase 4 (315 aa).

The N-terminal stretch at 1-19 (MAIFKILVLLLSLCCFSQA) is a signal peptide. Q20 carries the post-translational modification Pyrrolidone carboxylic acid. 4 disulfides stabilise this stretch: C30/C110, C63/C68, C116/C311, and C195/C221. H61 functions as the Proton acceptor in the catalytic mechanism. Residues D62, V65, G67, D69, and S71 each contribute to the Ca(2+) site. P158 contributes to the substrate binding site. H188 contacts heme b. T189 lines the Ca(2+) pocket. Residue N205 is glycosylated (N-linked (GlcNAc...) asparagine). Positions 234, 237, and 242 each coordinate Ca(2+).

This sequence belongs to the peroxidase family. Classical plant (class III) peroxidase subfamily. Requires heme b as cofactor. Ca(2+) is required as a cofactor.

The protein localises to the secreted. It carries out the reaction 2 a phenolic donor + H2O2 = 2 a phenolic radical donor + 2 H2O. Removal of H(2)O(2), oxidation of toxic reductants, biosynthesis and degradation of lignin, suberization, auxin catabolism, response to environmental stresses such as wounding, pathogen attack and oxidative stress. These functions might be dependent on each isozyme/isoform in each plant tissue. This chain is Peroxidase 4 (PER4), found in Arabidopsis thaliana (Mouse-ear cress).